Consider the following 249-residue polypeptide: tRNA pseudouridine synthase A (249 aa).

Residue aspartate 53 is the Nucleophile of the active site. Tyrosine 111 lines the substrate pocket.

The protein belongs to the tRNA pseudouridine synthase TruA family. In terms of assembly, homodimer.

The enzyme catalyses uridine(38/39/40) in tRNA = pseudouridine(38/39/40) in tRNA. Functionally, formation of pseudouridine at positions 38, 39 and 40 in the anticodon stem and loop of transfer RNAs. The sequence is that of tRNA pseudouridine synthase A from Streptococcus pneumoniae (strain 70585).